We begin with the raw amino-acid sequence, 107 residues long: Growth-regulated alpha protein (107 aa).

An N-terminal signal peptide occupies residues 1 to 34; the sequence is MARAALSAAPSNPRLLRVALLLLLLVAAGRRAAG. 2 disulfide bridges follow: Cys43-Cys69 and Cys45-Cys85.

The protein belongs to the intercrine alpha (chemokine CxC) family. In terms of processing, N-terminal processed forms GRO-alpha(4-73), GRO-alpha(5-73) and GRO-alpha(6-73) are produced by proteolytic cleavage after secretion from peripheral blood monocytes.

Its subcellular location is the secreted. In terms of biological role, has chemotactic activity for neutrophils. May play a role in inflammation and exerts its effects on endothelial cells in an autocrine fashion. In vitro, the processed forms GRO-alpha(4-73), GRO-alpha(5-73) and GRO-alpha(6-73) show a 30-fold higher chemotactic activity. This Homo sapiens (Human) protein is Growth-regulated alpha protein (CXCL1).